Consider the following 184-residue polypeptide: Ribosome-recycling factor (184 aa).

It belongs to the RRF family.

It localises to the cytoplasm. Responsible for the release of ribosomes from messenger RNA at the termination of protein biosynthesis. May increase the efficiency of translation by recycling ribosomes from one round of translation to another. This Clostridium botulinum (strain Okra / Type B1) protein is Ribosome-recycling factor.